The following is a 475-amino-acid chain: Cytosolic non-specific dipeptidase (475 aa).

Ala2 is subject to N-acetylalanine. Residue Lys9 is modified to N6-acetyllysine. At Ser58 the chain carries Phosphoserine. Residue His99 coordinates Mn(2+). Residue Asp101 is part of the active site. Asp132 contacts Mn(2+). Residue Glu166 is the Proton acceptor of the active site. Substrate contacts are provided by residues Glu166 to Glu167, Asp195, and His228. Mn(2+) is bound by residues Glu167 and Asp195. Position 299 is a phosphoserine (Ser299). Substrate-binding residues include Thr330, Arg343, Ser417, and His445. His445 serves as a coordination point for Mn(2+).

Belongs to the peptidase M20A family. Homodimer. Mn(2+) serves as cofactor. As to expression, ubiquitously expressed with higher levels in kidney and liver (at protein level). Expressed in peripheral blood leukocytes. Expressed in gastric mucosa and down-regulated in gastric cancer mucosal tissues (at protein level). In terms of tissue distribution, broadly expressed in fetal tissues. Expressed in adult liver and placenta.

It is found in the cytoplasm. It carries out the reaction Hydrolysis of dipeptides, preferentially hydrophobic dipeptides including prolyl amino acids.. The catalysed reaction is L-threonyl-L-threonine + H2O = 2 L-threonine. It catalyses the reaction L-threonyl-L-serine + H2O = L-threonine + L-serine. The enzyme catalyses L-seryl-L-threonine + H2O = L-threonine + L-serine. It carries out the reaction L-cysteinylglycine + H2O = L-cysteine + glycine. The catalysed reaction is L-alanyl-L-cysteine + H2O = L-cysteine + L-alanine. It catalyses the reaction (S)-lactate + L-phenylalanine = N-[(S)-lactoyl]-L-phenylalanine + H2O. Inhibited by p-hydroxymercurybenzoate. The inhibitory concentration 50% (IC(50)) is 13 uM. Inhibited by bestatin. The inhibitory concentration 50% (IC(50)) is 7 nM at pH 9.5. Catalyzes the peptide bond hydrolysis in dipeptides, displaying a non-redundant activity toward threonyl dipeptides. Mediates threonyl dipeptide catabolism in a tissue-specific way. Has high dipeptidase activity toward cysteinylglycine, an intermediate metabolite in glutathione metabolism. Metabolizes N-lactoyl-amino acids, both through hydrolysis to form lactic acid and amino acids, as well as through their formation by reverse proteolysis. Plays a role in the regulation of cell cycle arrest and apoptosis. This Homo sapiens (Human) protein is Cytosolic non-specific dipeptidase.